Reading from the N-terminus, the 1150-residue chain is Cell division cycle and apoptosis regulator protein 1 (1150 aa).

Residues 1 to 249 (MAQFGGQKNP…TQPQPQSLLQ (249 aa)) form an interaction with AR region. Disordered regions lie at residues 124–146 (PTAQ…QPQK) and 285–354 (IVSQ…SPRR). Residues 134–146 (TPRSSQQQTQPQK) show a composition bias toward low complexity. The tract at residues 203–660 (QRIQTLPNQN…RALSSKGLKS (458 aa)) is interaction with GATA2. 2 stretches are compositionally biased toward basic and acidic residues: residues 293–334 (RRLD…ERSP) and 341–352 (ERSPRRERERSP). Serine 456 is modified (phosphoserine). Positions 594–618 (KQQLVEKLQGERKEADGEQDEEEKD) form a coiled coil. The segment at 600–638 (KLQGERKEADGEQDEEEKDDGEAKEISTPTHWSKLDPKT) is disordered. The segment covering 610–621 (GEQDEEEKDDGE) has biased composition (acidic residues). Phosphothreonine is present on threonine 627. In terms of domain architecture, SAP spans 636–670 (PKTMKVNDLRKELESRALSSKGLKSQLIARLTKQL). Residue lysine 637 forms a Glycyl lysine isopeptide (Lys-Gly) (interchain with G-Cter in ubiquitin) linkage. An interaction with GATA1 region spans residues 643–1150 (DLRKELESRA…QKSKENGASV (508 aa)). Threonine 667 bears the Phosphothreonine mark. Basic and acidic residues-rich tracts occupy residues 673-687 (EEQK…KSEK), 694-713 (DRKS…EEIE), 796-817 (KEDK…KKEE), and 832-855 (SGDD…KDDS). Disordered regions lie at residues 673 to 713 (EEQK…EEIE) and 796 to 915 (KEDK…EKEK). Residues serine 685 and serine 697 each carry the phosphoserine modification. Residues 856–889 (KDDDETEEDNNQDEYDPMEAEEAEDEEDDRDEEE) show a composition bias toward acidic residues. Threonine 861 bears the Phosphothreonine mark. Residues 890–915 (MTKRDDKRDINRYCKERPSKDKEKEK) show a composition bias toward basic and acidic residues. A Glycyl lysine isopeptide (Lys-Gly) (interchain with G-Cter in SUMO1); alternate cross-link involves residue lysine 1012. A Glycyl lysine isopeptide (Lys-Gly) (interchain with G-Cter in SUMO2); alternate cross-link involves residue lysine 1012. A coiled-coil region spans residues 1033 to 1114 (DVGSLLQKLE…LQFENQMNKT (82 aa)). Glycyl lysine isopeptide (Lys-Gly) (interchain with G-Cter in SUMO2) cross-links involve residues lysine 1067 and lysine 1135.

In terms of assembly, directly interacts with ESR1, NR3C1 and p53/TP53. Interacts (via N-terminus) with CALCOCO1. Interacts with MED1. Interacts with GATA1. Interacts with AR and GATA2. In terms of tissue distribution, expressed in various epithelial cancer cell lines, including breast, colon, prostate, pancreatic and leukemia. Expression is regulated by growth factors.

It is found in the cytoplasm. The protein resides in the perinuclear region. Functionally, associates with components of the Mediator and p160 coactivator complexes that play a role as intermediaries transducing regulatory signals from upstream transcriptional activator proteins to basal transcription machinery at the core promoter. Recruited to endogenous nuclear receptor target genes in response to the appropriate hormone. Also functions as a p53 coactivator. May thus play an important role in transcriptional regulation. May be involved in apoptosis signaling in the presence of the reinoid CD437. Apoptosis induction involves sequestration of 14-3-3 protein(s) and mediated altered expression of multiple cell cycle regulatory genes including MYC, CCNB1 and CDKN1A. Plays a role in cell cycle progression and/or cell proliferation. In association with CALCOCO1 enhances GATA1- and MED1-mediated transcriptional activation from the gamma-globin promoter during erythroid differentiation of K562 erythroleukemia cells. Can act as a both a coactivator and corepressor of AR-mediated transcription. Contributes to chromatin looping and AR transcription complex assembly by stabilizing AR-GATA2 association on chromatin and facilitating MED1 and RNA polymerase II recruitment to AR-binding sites. May play an important role in the growth and tumorigenesis of prostate cancer cells. This is Cell division cycle and apoptosis regulator protein 1 (CCAR1) from Homo sapiens (Human).